The following is a 416-amino-acid chain: MHRKGGQTLRLYTHFLLHLSPHHHSFLDSIWQRKMVHPSSAFHPYTRPIPTTSGHDLPVDDSLRLLLSAEALIALAQLQDASKILPSYEPVKDFSPQLLPAMTPTPIIATPSIPEQPQPLQSPSAPNEKSRRKRTTFSPEQATRLEAEYIGDSYMAREKRHLLAQSLKLSENQVKTWFQNRRAKDKRDRKSENASNHTSNSRRSSPSRKSSSDSTPTPTQATQFDMPTQIQTASPPTTADSAIFPPTSPESIIQKIEQFPSNQILPNFDILQTYLQSLSSSQIPLQFVPSTPPLFDPNMLQLYHVIFEFSQSETCSVSFQRNSASNMRSLLIFVFFATIFAVDAQYDSADSSQSEDLPDIAPESVSSEEIIEVDVNIEGSGSGDGPIIDQVHMFGILPGPGDIRKKRGILEILGRK.

Over residues 103–113 (TPTPIIATPSI) the composition is skewed to low complexity. Disordered regions lie at residues 103-144 (TPTP…QATR) and 178-247 (FQNR…FPPT). Residues 118-127 (QPLQSPSAPN) show a composition bias toward polar residues. The homeobox DNA-binding region spans 130–189 (SRRKRTTFSPEQATRLEAEYIGDSYMAREKRHLLAQSLKLSENQVKTWFQNRRAKDKRDR). Positions 193-218 (NASNHTSNSRRSSPSRKSSSDSTPTP) are enriched in low complexity. The span at 219-240 (TQATQFDMPTQIQTASPPTTAD) shows a compositional bias: polar residues.

The protein localises to the nucleus. This Caenorhabditis elegans protein is Homeobox protein ceh-62.